A 1137-amino-acid polypeptide reads, in one-letter code: DENN domain-containing protein 2B (1137 aa).

Residues 1 to 12 are compositionally biased toward polar residues; sequence MTMTANKNSSIT. The tract at residues 1–99 is disordered; sequence MTMTANKNSS…PTCPFKTASF (99 aa). Phosphoserine occurs at positions 30 and 32. The segment covering 32-43 has biased composition (pro residues); it reads SPPPVLSPPRSP. Positions 49–64 are enriched in polar residues; the sequence is DSETSACRYPSHSSSR. The span at 73–92 shows a compositional bias: pro residues; the sequence is PAPSPQNPQDPSPDTSPPTC. Thr-231 is subject to Phosphothreonine. Phosphoserine is present on Ser-233. The interval 293–573 is disordered; that stretch reads KEQPGRGLPQ…HRLPRLPKRH (281 aa). Low complexity predominate over residues 324–348; sequence EEPAGGASVSAGSRAVGVAGVAGEA. At Thr-364 the chain carries Phosphothreonine. Ser-368 is modified (phosphoserine). Low complexity predominate over residues 368-380; the sequence is SPSSQRLPSKSSL. The segment covering 392–402 has biased composition (basic and acidic residues); that stretch reads RTFEYEADKNP. Residues 401 to 447 form an interaction with ABL1 region; it reads NPKSKPSNGLPPSPTPAAPPPLPSTPAPPVTRRPKKDMRGHRKSQSR. The segment covering 409-431 has biased composition (pro residues); sequence GLPPSPTPAAPPPLPSTPAPPVT. Basic residues predominate over residues 432–446; it reads RRPKKDMRGHRKSQS. Polar residues predominate over residues 456 to 481; that stretch reads SSLQSLYPSSPTENGTENQPKFGSKS. Thr-482 bears the Phosphothreonine mark. Basic and acidic residues predominate over residues 495 to 508; sequence LPKENPYEDVDLKS. Composition is skewed to polar residues over residues 514–524 and 539–558; these read KSQQLSENSLD and SPPT…SGNW. Ser-545 carries the phosphoserine modification. Basic residues predominate over residues 562 to 573; sequence KSHRLPRLPKRH. 2 positions are modified to phosphoserine: Ser-574 and Ser-622. Positions 641-661 are disordered; sequence IETASLRDENSESESDSDDRF. One can recognise a uDENN domain in the interval 698 to 846; it reads EYFVVVSLKK…PFPAPGKTIK (149 aa). In terms of domain architecture, cDENN spans 868-1001; that stretch reads RLEHVDFECL…LQAALEQALE (134 aa). The dDENN domain maps to 1003–1096; it reads KNELISQDSD…QDRELRKCRA (94 aa).

Interacts with ITSN1 and GRB2. Isoform 1 interacts with the SH3 domain of ABL1. In terms of processing, phosphorylated. Phosphorylation decreases ITSN1 binding. In terms of tissue distribution, widely expressed with the exception of peripheral blood lymphocytes. Isoform 1 is expressed in several epithelial and fibroblast (including tumorigenic) but absent in lymphoid cell lines (at protein level). Isoform 3 is expressed in primary cell or weakly tumorigenic but not in tumorigenic cell lines (at protein level).

The protein resides in the cytoplasm. The protein localises to the cell cortex. It is found in the cell membrane. Its subcellular location is the recycling endosome. In terms of biological role, may be involved in cytoskeletal organization and tumorogenicity. Seems to be involved in a signaling transduction pathway leading to activation of MAPK1/ERK2. Plays a role in EGFR trafficking from recycling endosomes back to the cell membrane. Its function is as follows. Guanine nucleotide exchange factor (GEF) which may activate RAB9A and RAB9B. Promotes the exchange of GDP to GTP, converting inactive GDP-bound Rab proteins into their active GTP-bound form. Functionally, may block ERK2 activation stimulated by ABL1. May alter cell morphology and cell growth. This is DENN domain-containing protein 2B from Homo sapiens (Human).